The primary structure comprises 196 residues: Transcriptional regulatory protein UhpA (196 aa).

The 114-residue stretch at Thr-3 to Ala-116 folds into the Response regulatory domain. Asp-54 bears the 4-aspartylphosphate mark. The HTH luxR-type domain maps to Ala-131 to Trp-196. Residues Val-155–Ala-174 constitute a DNA-binding region (H-T-H motif).

In terms of processing, phosphorylated and dephosphorylated by UhpB.

The protein resides in the cytoplasm. Its function is as follows. Part of the UhpABC signaling cascade that controls the expression of the hexose phosphate transporter UhpT. Activates the transcription of the uhpT gene. Acts by binding specifically to the uhpT promoter region. The chain is Transcriptional regulatory protein UhpA (uhpA) from Salmonella typhimurium (strain LT2 / SGSC1412 / ATCC 700720).